Reading from the N-terminus, the 207-residue chain is Fibroblast growth factor 18 (207 aa).

Positions M1–A27 are cleaved as a signal peptide. Residue N39 is glycosylated (N-linked (GlcNAc...) asparagine). C109 and C127 are oxidised to a cystine. N-linked (GlcNAc...) asparagine glycosylation occurs at N137. Residues G157–Q186 are disordered. Residues K164–F174 show a composition bias toward basic and acidic residues.

The protein belongs to the heparin-binding growth factors family. As to quaternary structure, interacts with FGFR3 and FGFR4.

The protein localises to the secreted. In terms of biological role, plays an important role in the regulation of cell proliferation, cell differentiation and cell migration. Required for normal ossification and bone development. Stimulates hepatic and intestinal proliferation. The chain is Fibroblast growth factor 18 (FGF18) from Homo sapiens (Human).